The sequence spans 840 residues: 9-beta-pimara-7,15-diene synthase, chloroplastic (840 aa).

The transit peptide at 1–56 (MASPMEAVARSSLVLAPRRRRALGLLPAAAAPFVLDCRRRHNGGMRRPHVSFACSA) directs the protein to the chloroplast. Positions 589, 593, 733, 737, and 741 each coordinate Mg(2+). The short motif at 589–593 (DDFFD) is the DDXXD motif element.

The protein belongs to the terpene synthase family. Mg(2+) serves as cofactor.

It localises to the plastid. The protein resides in the chloroplast. The enzyme catalyses 9alpha-copalyl diphosphate = 9beta-pimara-7,15-diene + diphosphate. In terms of biological role, involved in the biosynthesis of momilactone A and B phytoalexins. Catalyzes the conversion of syn-copalyl diphosphate to the phytoalexin precursor syn-pimara-7,15-diene. The polypeptide is 9-beta-pimara-7,15-diene synthase, chloroplastic (Oryza sativa subsp. indica (Rice)).